The sequence spans 159 residues: Ribosomal RNA large subunit methyltransferase H (159 aa).

Positions 76 and 108 each coordinate S-adenosyl-L-methionine.

It belongs to the RNA methyltransferase RlmH family. In terms of assembly, homodimer.

The protein resides in the cytoplasm. It catalyses the reaction pseudouridine(1915) in 23S rRNA + S-adenosyl-L-methionine = N(3)-methylpseudouridine(1915) in 23S rRNA + S-adenosyl-L-homocysteine + H(+). Its function is as follows. Specifically methylates the pseudouridine at position 1915 (m3Psi1915) in 23S rRNA. The protein is Ribosomal RNA large subunit methyltransferase H of Finegoldia magna (strain ATCC 29328 / DSM 20472 / WAL 2508) (Peptostreptococcus magnus).